The sequence spans 131 residues: C-glycoside deglycosidase beta subunit (131 aa).

It belongs to the C-glycoside deglycosidase beta subunit family. As to quaternary structure, heterodimer composed of an alpha subunit (CarB) and a beta subunit (CarC). It depends on a divalent metal cation as a cofactor.

It carries out the reaction 3''-dehydroisovitexin = 1,5-anhydro-D-erythro-hex-1-en-3-ulose + apigenin. The catalysed reaction is 3''-dehydroisoorientin = 1,5-anhydro-D-erythro-hex-1-en-3-ulose + luteolin. Its function is as follows. Carbon-carbon bond-cleaving enzyme which participates in the metabolism of C-glycosides. Acts on the C6-glycosylated compounds 3''-dehydroisovitexin (3''-oxo-isovitexin) and 3''-dehydroisoorientin (3''-oxo-homoorientin). Shows weak activity with 3'-dehydromangiferin (3'-oxo-mangiferin). This is C-glycoside deglycosidase beta subunit from Microbacterium trichothecenolyticum (Aureobacterium trichothecenolyticum).